A 338-amino-acid polypeptide reads, in one-letter code: Fructose-1,6-bisphosphatase class 1 (338 aa).

Residues Glu92, Asp113, Leu115, and Asp116 each contribute to the Mg(2+) site. Substrate is bound by residues 116–119 (DGSS), Asn208, and Lys274. Glu280 contacts Mg(2+).

This sequence belongs to the FBPase class 1 family. In terms of assembly, homotetramer. Requires Mg(2+) as cofactor.

The protein localises to the cytoplasm. It carries out the reaction beta-D-fructose 1,6-bisphosphate + H2O = beta-D-fructose 6-phosphate + phosphate. It functions in the pathway carbohydrate biosynthesis; gluconeogenesis. This chain is Fructose-1,6-bisphosphatase class 1, found in Paramagnetospirillum magneticum (strain ATCC 700264 / AMB-1) (Magnetospirillum magneticum).